The following is a 314-amino-acid chain: tRNA pseudouridine synthase B (314 aa).

Position 43 (His43) interacts with substrate. The Nucleophile role is filled by Asp48. Residues Tyr76, Tyr179, and Leu200 each contribute to the substrate site.

It belongs to the pseudouridine synthase TruB family. Type 1 subfamily.

The enzyme catalyses uridine(55) in tRNA = pseudouridine(55) in tRNA. In terms of biological role, responsible for synthesis of pseudouridine from uracil-55 in the psi GC loop of transfer RNAs. In Enterobacter sp. (strain 638), this protein is tRNA pseudouridine synthase B.